The primary structure comprises 396 residues: 1-deoxy-D-xylulose 5-phosphate reductoisomerase (396 aa).

The NADPH site is built by threonine 10, glycine 11, serine 12, isoleucine 13, and asparagine 123. Lysine 124 is a 1-deoxy-D-xylulose 5-phosphate binding site. Position 125 (glutamate 125) interacts with NADPH. Aspartate 149 serves as a coordination point for Mn(2+). Positions 150, 151, 185, and 208 each coordinate 1-deoxy-D-xylulose 5-phosphate. Glutamate 151 provides a ligand contact to Mn(2+). Glycine 214 lines the NADPH pocket. Positions 221, 226, 227, and 230 each coordinate 1-deoxy-D-xylulose 5-phosphate. Residue glutamate 230 participates in Mn(2+) binding.

This sequence belongs to the DXR family. Mg(2+) serves as cofactor. Requires Mn(2+) as cofactor.

The catalysed reaction is 2-C-methyl-D-erythritol 4-phosphate + NADP(+) = 1-deoxy-D-xylulose 5-phosphate + NADPH + H(+). Its pathway is isoprenoid biosynthesis; isopentenyl diphosphate biosynthesis via DXP pathway; isopentenyl diphosphate from 1-deoxy-D-xylulose 5-phosphate: step 1/6. In terms of biological role, catalyzes the NADPH-dependent rearrangement and reduction of 1-deoxy-D-xylulose-5-phosphate (DXP) to 2-C-methyl-D-erythritol 4-phosphate (MEP). This chain is 1-deoxy-D-xylulose 5-phosphate reductoisomerase, found in Shewanella frigidimarina (strain NCIMB 400).